Consider the following 532-residue polypeptide: Protoporphyrinogen oxidase (532 aa).

FAD-binding positions include 9–14, I289, and 511–513; these read GSGISG and VGI.

It belongs to the protoporphyrinogen/coproporphyrinogen oxidase family. Protoporphyrinogen oxidase subfamily. FAD is required as a cofactor.

It is found in the mitochondrion. It catalyses the reaction protoporphyrinogen IX + 3 O2 = protoporphyrin IX + 3 H2O2. Its pathway is porphyrin-containing compound metabolism; protoporphyrin-IX biosynthesis; protoporphyrin-IX from protoporphyrinogen-IX: step 1/1. In terms of biological role, catalyzes the 6-electron oxidation of protoporphyrinogen-IX to form protoporphyrin-IX. The chain is Protoporphyrinogen oxidase (ppox) from Dictyostelium discoideum (Social amoeba).